The chain runs to 468 residues: Peripherin (468 aa).

Residues 1–16 (MSHHSSGLRSSISSTS) are compositionally biased toward low complexity. The disordered stretch occupies residues 1–22 (MSHHSSGLRSSISSTSYRRTFG). Residues 1–96 (MSHHSSGLRS…FLATRSNEKQ (96 aa)) are head. Tyr-17 is subject to 3'-nitrotyrosine. Phosphoserine occurs at positions 28, 50, and 59. The IF rod domain occupies 94–404 (EKQELQELND…KLLEGEESRI (311 aa)). Residues 97–129 (ELQELNDRFANFIEKVRFLEQQNAALRGELSQA) form a coil 1A region. The linker 1 stretch occupies residues 130–140 (RGQEPARADQL). Residues 141–236 (CQQELRELRR…KLHEEELRDL (96 aa)) are coil 1B. The segment at 237-259 (QVSVESQQVQQVEVEATVKPELT) is linker 2. The tract at residues 260–402 (AALRDIRAQY…YRKLLEGEES (143 aa)) is coil 2. 3'-nitrotyrosine is present on Tyr-376. Residues 403–468 (RISVPVHSFA…ELDKSSIHSY (66 aa)) form a tail region. The tract at residues 445 to 468 (GEKVVTESQKEQHSELDKSSIHSY) is disordered. Residue Tyr-468 is modified to Phosphotyrosine.

Belongs to the intermediate filament family. As to quaternary structure, forms homodimers (in vitro). Homopolymerizes into a filamentous network (in vitro). Forms heterodimers with NEFL, NEFM or NEFH (in vitro). Interacts with DST (via C-terminus). Interacts with RAB7A; the interaction is direct. Interacts with PRKCE (via phorbol-ester/DAG-type 2 domain). Phosphorylated; phosphorylation increases after nerve injury in regenerating neurons. Expressed in hypoglossal motor neurons (at protein level). Expressed in the small and large sensory neurons of the dorsal root ganglion (at protein level). Expressed in cutaneous and muscular sensory neurons.

It localises to the cytoplasm. The protein resides in the cytoskeleton. It is found in the cell projection. Its subcellular location is the axon. The protein localises to the perikaryon. In terms of biological role, class-III neuronal intermediate filament protein. My form an independent structural network without the involvement of other neurofilaments or may cooperate with the neuronal intermediate filament proteins NEFL, NEFH, NEFM and INA to form a filamentous network. Assembly of the neuronal intermediate filaments may be regulated by RAB7A. Plays a role in the development of unmyelinated sensory neurons. May be involved in axon elongation and axon regeneration after injury. Inhibits neurite extension in type II spiral ganglion neurons in the cochlea. This Rattus norvegicus (Rat) protein is Peripherin (Prph).